A 439-amino-acid chain; its full sequence is tRNA-2-methylthio-N(6)-dimethylallyladenosine synthase (439 aa).

Positions 5–121 (KKLFIKTYGC…LPELEAKTRA (117 aa)) constitute an MTTase N-terminal domain. The [4Fe-4S] cluster site is built by cysteine 14, cysteine 50, cysteine 84, cysteine 159, cysteine 163, and cysteine 166. One can recognise a Radical SAM core domain in the interval 145–378 (AKRGPTAFLT…ITRHQREIQD (234 aa)). Residues 378–439 (DGMVGREVSV…GANSLAGELA (62 aa)) form the TRAM domain.

This sequence belongs to the methylthiotransferase family. MiaB subfamily. As to quaternary structure, monomer. [4Fe-4S] cluster serves as cofactor.

It is found in the cytoplasm. The enzyme catalyses N(6)-dimethylallyladenosine(37) in tRNA + (sulfur carrier)-SH + AH2 + 2 S-adenosyl-L-methionine = 2-methylsulfanyl-N(6)-dimethylallyladenosine(37) in tRNA + (sulfur carrier)-H + 5'-deoxyadenosine + L-methionine + A + S-adenosyl-L-homocysteine + 2 H(+). Functionally, catalyzes the methylthiolation of N6-(dimethylallyl)adenosine (i(6)A), leading to the formation of 2-methylthio-N6-(dimethylallyl)adenosine (ms(2)i(6)A) at position 37 in tRNAs that read codons beginning with uridine. The sequence is that of tRNA-2-methylthio-N(6)-dimethylallyladenosine synthase from Ruegeria pomeroyi (strain ATCC 700808 / DSM 15171 / DSS-3) (Silicibacter pomeroyi).